The primary structure comprises 284 residues: Shikimate dehydrogenase (NADP(+)) (284 aa).

Residues 19-21 and threonine 66 contribute to the shikimate site; that span reads SFS. The Proton acceptor role is filled by lysine 70. Aspartate 82 is a binding site for NADP(+). Shikimate is bound by residues asparagine 91 and aspartate 106. NADP(+) contacts are provided by residues 130 to 134 and isoleucine 226; that span reads GSGGS. Residue tyrosine 228 participates in shikimate binding. Residue glycine 249 participates in NADP(+) binding.

Belongs to the shikimate dehydrogenase family. In terms of assembly, homodimer.

It carries out the reaction shikimate + NADP(+) = 3-dehydroshikimate + NADPH + H(+). It functions in the pathway metabolic intermediate biosynthesis; chorismate biosynthesis; chorismate from D-erythrose 4-phosphate and phosphoenolpyruvate: step 4/7. Its function is as follows. Involved in the biosynthesis of the chorismate, which leads to the biosynthesis of aromatic amino acids. Catalyzes the reversible NADPH linked reduction of 3-dehydroshikimate (DHSA) to yield shikimate (SA). The chain is Shikimate dehydrogenase (NADP(+)) from Methanococcus vannielii (strain ATCC 35089 / DSM 1224 / JCM 13029 / OCM 148 / SB).